An 805-amino-acid polypeptide reads, in one-letter code: Phenylalanine--tRNA ligase beta subunit (805 aa).

A tRNA-binding domain is found at 39–148 (APPFTGVVVT…AALRPGTDIR (110 aa)). The 76-residue stretch at 399–474 (PVREPVRMRL…RVYGFERIPD (76 aa)) folds into the B5 domain. Positions 452, 458, 461, and 462 each coordinate Mg(2+). The FDX-ACB domain maps to 703–804 (SRQPVVVRDL…LVAAHNARQR (102 aa)).

This sequence belongs to the phenylalanyl-tRNA synthetase beta subunit family. Type 1 subfamily. As to quaternary structure, tetramer of two alpha and two beta subunits. Mg(2+) serves as cofactor.

It is found in the cytoplasm. The catalysed reaction is tRNA(Phe) + L-phenylalanine + ATP = L-phenylalanyl-tRNA(Phe) + AMP + diphosphate + H(+). The chain is Phenylalanine--tRNA ligase beta subunit from Bordetella pertussis (strain Tohama I / ATCC BAA-589 / NCTC 13251).